The following is a 654-amino-acid chain: MPTMPLLLAALAALAVLALAARPSPSCSPGPDPSGKCQRLVYTHSATCVDLHLRTCADAAYNHTSFPTPLEHRSWEAVESSPEYMLLGVIHFLLEGQCNPDLRLLGCSVLAPRCEGGHTQRPCRHVCEGLREACQPAFDAIDMAWPYFLDCAQYFAPEEEGCYDPLEELRGELDVEEALPSGLPPTFIRFAHHSYAQMVRVLKRTAARCSQVAKTYSIGRSFEGKDLVVIEFSSRPGQHELMEPEVKLIGNIHGNEVAGREVLIYLAQYLCSEYLLGNPRIQRLLNTTRIHLLPSMNPDGYEVAAAEGAGYNGWTSGRQNAQNLDLNRNFPDLTSEYYRLASTRGVRTDHIPISQYYWWGKVAPETKAIMKWIQTIPFVLSASLHGGDLVVSYPFDFSKNPHEKKMFSPTPDEKMFKLLARAYADVHPMMMDRSENRCGGNFLKRGSIINGADWYSFTGGMSDFNYLHTNCFEITVELGCVKFPPEEALYGLWQQNKEPLLNFLEMVHRGIKGMVTDKYGKPVKNARILVKGIRHDVTTAPDGDYWRLLPPGSHIVIAQAPGYSKVMKRVTIPLRMKKAGRVDFILHPLATGPKNFLPGPSRALPRFQDPQREPTQMDFEPPRARRQPASGSKPWWWAYFTSLSPYKPRWLLKY.

The N-terminal stretch at 1-20 (MPTMPLLLAALAALAVLALA) is a signal peptide. The FZ domain occupies 43–165 (THSATCVDLH…APEEEGCYDP (123 aa)). 5 disulfide bridges follow: C48–C114, C56–C107, C98–C134, C123–C162, and C127–C151. An N-linked (GlcNAc...) asparagine glycan is attached at N62. One can recognise a Peptidase M14 domain in the interval 191-507 (AHHSYAQMVR…EPLLNFLEMV (317 aa)). Zn(2+) is bound by residues H253 and E256. N-linked (GlcNAc...) asparagine glycosylation is present at N286. Position 385 (H385) interacts with Zn(2+). E477 (proton donor/acceptor) is an active-site residue. Residues 596 to 630 (FLPGPSRALPRFQDPQREPTQMDFEPPRARRQPAS) are disordered.

It belongs to the peptidase M14 family. Requires Zn(2+) as cofactor.

It is found in the secreted. The protein resides in the extracellular space. Its subcellular location is the extracellular matrix. Inhibited by 2-mercaptomethyl-3-guanidinoethylthiopropanoic acid (MGTA) and guanidinoethylmercaptosuccinic acid (GEMSA). Inhibited by chelating agents such as EDTA and EGTA. Its function is as follows. Cleaves substrates with C-terminal arginine residues. Probably modulates the Wnt signaling pathway, by cleaving some undefined protein. May play a role in cleavage during prohormone processing. This Mus musculus (Mouse) protein is Carboxypeptidase Z (Cpz).